Consider the following 352-residue polypeptide: Pyruvate dehydrogenase E1 component subunit beta, mitochondrial (352 aa).

Residues M1–A21 constitute a mitochondrion transit peptide. A thiamine diphosphate-binding site is contributed by E81. Residues I134, A182, I183, D185, and N187 each coordinate K(+).

Tetramer of 2 alpha and 2 beta subunits. Thiamine diphosphate serves as cofactor.

It is found in the mitochondrion matrix. It carries out the reaction N(6)-[(R)-lipoyl]-L-lysyl-[protein] + pyruvate + H(+) = N(6)-[(R)-S(8)-acetyldihydrolipoyl]-L-lysyl-[protein] + CO2. Its function is as follows. The pyruvate dehydrogenase complex catalyzes the overall conversion of pyruvate to acetyl-CoA and CO(2). It contains multiple copies of three enzymatic components: pyruvate dehydrogenase (E1), dihydrolipoamide acetyltransferase (E2) and lipoamide dehydrogenase (E3). The polypeptide is Pyruvate dehydrogenase E1 component subunit beta, mitochondrial (pdhb-1) (Caenorhabditis elegans).